Reading from the N-terminus, the 96-residue chain is Large ribosomal subunit protein bL25 (96 aa).

It belongs to the bacterial ribosomal protein bL25 family. In terms of assembly, part of the 50S ribosomal subunit; part of the 5S rRNA/L5/L18/L25 subcomplex. Contacts the 5S rRNA. Binds to the 5S rRNA independently of L5 and L18.

Its function is as follows. This is one of the proteins that binds to the 5S RNA in the ribosome where it forms part of the central protuberance. This Francisella tularensis subsp. tularensis (strain FSC 198) protein is Large ribosomal subunit protein bL25.